The sequence spans 296 residues: Probable lipid kinase YegS-like (296 aa).

One can recognise a DAGKc domain in the interval 1–130 (MPHTLLILNG…IDLAQVNGEH (130 aa)). Residues threonine 37, 63–69 (GDGTINE), and threonine 92 contribute to the ATP site. The Mg(2+) site is built by leucine 212, aspartate 215, and leucine 217. The active-site Proton acceptor is the glutamate 268.

The protein belongs to the diacylglycerol/lipid kinase family. YegS lipid kinase subfamily. Requires Mg(2+) as cofactor. It depends on Ca(2+) as a cofactor.

The protein resides in the cytoplasm. Functionally, probably phosphorylates lipids; the in vivo substrate is unknown. This is Probable lipid kinase YegS-like from Yersinia pseudotuberculosis serotype I (strain IP32953).